Consider the following 313-residue polypeptide: DNA-directed RNA polymerase subunit alpha (313 aa).

The interval Met1–Tyr227 is alpha N-terminal domain (alpha-NTD). The interval Arg242–Glu313 is alpha C-terminal domain (alpha-CTD).

The protein belongs to the RNA polymerase alpha chain family. As to quaternary structure, homodimer. The RNAP catalytic core consists of 2 alpha, 1 beta, 1 beta' and 1 omega subunit. When a sigma factor is associated with the core the holoenzyme is formed, which can initiate transcription.

It catalyses the reaction RNA(n) + a ribonucleoside 5'-triphosphate = RNA(n+1) + diphosphate. Its function is as follows. DNA-dependent RNA polymerase catalyzes the transcription of DNA into RNA using the four ribonucleoside triphosphates as substrates. The sequence is that of DNA-directed RNA polymerase subunit alpha from Rubrobacter xylanophilus (strain DSM 9941 / JCM 11954 / NBRC 16129 / PRD-1).